Reading from the N-terminus, the 152-residue chain is Pertussis toxin subunit 4 (152 aa).

The signal sequence occupies residues 1–42 (MLRRFPTRTTAPGQGGARRSRVRALAWLLASGAMTHLSPALA). Intrachain disulfides connect cysteine 73-cysteine 93 and cysteine 145-cysteine 151.

In terms of assembly, pertussis toxin contains five different chains, S1-S5. They are organized into 2 functional subunits: A, composed of S1 (which is toxic) and B, containing S2, S3, S5, and two copies of S4 (B binds to the membrane receptors). Dimers of S2-S4 and S3-S4 are held together by S5.

It is found in the secreted. It localises to the host cell membrane. In terms of biological role, PTX oligomer B binds to receptors on the eukaryotic cell surface and facilitates the translocation of the toxic subunit across the cell membrane. The sequence is that of Pertussis toxin subunit 4 (ptxD) from Bordetella parapertussis (strain 12822 / ATCC BAA-587 / NCTC 13253).